The primary structure comprises 146 residues: MEMDKRMKSLAMTAFFGELNTLDIMALIMSIFKHHPNNTIFSVDKDGQFMIDFEYDNYKASQYLDLTLTPISGNECKTHASSIAEQLACVDIIKEDISEYIKTTPRLKRFIKKYRNRSYTRISRDTEKLKIALAKGIDYEYIKDAC.

Residues 10 to 31 (LAMTAFFGELNTLDIMALIMSI) traverse the membrane as a helical segment.

This sequence belongs to the orthopoxvirus OPG112 family.

Its subcellular location is the host membrane. The protein localises to the host cytoplasm. Functionally, contributes to the formation of crescents and immature virions (IV). Interacts with phosphatidylinositol-3-phosphate (PI3P) and phosphatidylinositol-4-phosphate (PI4P) lipids in order to form virion membranes. Mechanistically, mediates proper formation of OPG125-hexamers, and hence the honey comb lattice and spherical immature virus. This chain is Late protein OPG112 (OPG112), found in Cynomys gunnisoni (Gunnison's prairie dog).